We begin with the raw amino-acid sequence, 150 residues long: uncharacterized protein (150 aa).

Helical transmembrane passes span 48-68, 89-109, and 123-143; these read LFLL…CFLF, VFIF…YLLP, and REVF…IFTL.

To M.pneumoniae MPN_085 central region.

The protein localises to the cell membrane. This is an uncharacterized protein from Mycoplasma pneumoniae (strain ATCC 29342 / M129 / Subtype 1) (Mycoplasmoides pneumoniae).